The primary structure comprises 301 residues: Small ribosomal subunit protein uS2 (301 aa).

This sequence belongs to the universal ribosomal protein uS2 family. As to quaternary structure, component of the small ribosomal subunit. Mature ribosomes consist of a small (40S) and a large (60S) subunit. The 40S subunit contains about 33 different proteins and 1 molecule of RNA (18S). The 60S subunit contains about 49 different proteins and 3 molecules of RNA (25S, 5.8S and 5S). Interacts with RPS21.

It localises to the cytoplasm. Required for the assembly and/or stability of the 40S ribosomal subunit. Required for the processing of the 20S rRNA-precursor to mature 18S rRNA in a late step of the maturation of 40S ribosomal subunits. In Ajellomyces dermatitidis (strain ER-3 / ATCC MYA-2586) (Blastomyces dermatitidis), this protein is Small ribosomal subunit protein uS2.